The chain runs to 375 residues: Carbamoyl phosphate synthase small chain (375 aa).

Residues Met1–Gly186 are CPSase. Residues Ser45, Gly238, and Gly240 each coordinate L-glutamine. In terms of domain architecture, Glutamine amidotransferase type-1 spans Arg190–Lys375. The active-site Nucleophile is the Cys265. L-glutamine contacts are provided by Leu266, Gln269, Asn307, Gly309, and Phe310. Active-site residues include His348 and Glu350.

The protein belongs to the CarA family. In terms of assembly, composed of two chains; the small (or glutamine) chain promotes the hydrolysis of glutamine to ammonia, which is used by the large (or ammonia) chain to synthesize carbamoyl phosphate. Tetramer of heterodimers (alpha,beta)4.

The enzyme catalyses hydrogencarbonate + L-glutamine + 2 ATP + H2O = carbamoyl phosphate + L-glutamate + 2 ADP + phosphate + 2 H(+). It carries out the reaction L-glutamine + H2O = L-glutamate + NH4(+). It participates in amino-acid biosynthesis; L-arginine biosynthesis; carbamoyl phosphate from bicarbonate: step 1/1. Its pathway is pyrimidine metabolism; UMP biosynthesis via de novo pathway; (S)-dihydroorotate from bicarbonate: step 1/3. Functionally, small subunit of the glutamine-dependent carbamoyl phosphate synthetase (CPSase). CPSase catalyzes the formation of carbamoyl phosphate from the ammonia moiety of glutamine, carbonate, and phosphate donated by ATP, constituting the first step of 2 biosynthetic pathways, one leading to arginine and/or urea and the other to pyrimidine nucleotides. The small subunit (glutamine amidotransferase) binds and cleaves glutamine to supply the large subunit with the substrate ammonia. This is Carbamoyl phosphate synthase small chain from Solidesulfovibrio magneticus (strain ATCC 700980 / DSM 13731 / RS-1) (Desulfovibrio magneticus).